The primary structure comprises 175 residues: Acetyl-CoA decarbonylase/synthase complex subunit epsilon 2 (175 aa).

The protein belongs to the CdhB family. As to quaternary structure, heterotetramer of two alpha and two epsilon subunits. The ACDS complex is made up of alpha, epsilon, beta, gamma and delta subunits with a probable stoichiometry of (alpha(2)epsilon(2))(4)-beta(8)-(gamma(1)delta(1))(8).

Part of a complex that catalyzes the reversible cleavage of acetyl-CoA, allowing autotrophic growth from CO(2). The alpha-epsilon subcomponent functions as a carbon monoxide dehydrogenase. The precise role of the epsilon subunit is unclear; it may have a stabilizing role within the alpha(2)epsilon(2) component and/or be involved in electron transfer to FAD during a potential FAD-mediated CO oxidation. The chain is Acetyl-CoA decarbonylase/synthase complex subunit epsilon 2 (cdhB2) from Archaeoglobus fulgidus (strain ATCC 49558 / DSM 4304 / JCM 9628 / NBRC 100126 / VC-16).